Here is a 169-residue protein sequence, read N- to C-terminus: Small ribosomal subunit protein uS13m (169 aa).

A disordered region spans residues 149–169; that stretch reads KKLQEKKNKEQKKSQKCKTKK. A compositionally biased stretch (basic and acidic residues) spans 150–161; sequence KLQEKKNKEQKK.

It belongs to the universal ribosomal protein uS13 family. As to quaternary structure, part of the small ribosomal subunit.

Its subcellular location is the mitochondrion. Its function is as follows. Located at the top of the head of the small subunit, it contacts several helices of the small subunit rRNA. This is Small ribosomal subunit protein uS13m (mrps13) from Dictyostelium discoideum (Social amoeba).